Here is a 361-residue protein sequence, read N- to C-terminus: Divinyl chlorophyll a/b light-harvesting protein PcbE (361 aa).

6 consecutive transmembrane segments (helical) span residues 27-47 (FIGSHVAHTGLIAFTAGANTL), 88-108 (VAFVGIFHLICSFVYALAGLL), 149-169 (FILGHHLVFFGVANIWFVEWA), 210-230 (VMGGHAFLAFFQIGGGAFHIA), 250-270 (AVLSWSLAGIGWMAIIAAFWC), and 315-335 (LSNVHYYLGFFFIQGHLWHAI).

The protein belongs to the PsbB/PsbC family. IsiA/Pcb subfamily. As to quaternary structure, the antenna complex consists of divinyl chlorophylls (a and b) and divinyl chlorophyll a/b binding proteins and binds more divinyl chlorophyll b than does the antenna complex from high-light-adapted Prochlorococcus. Divinyl chlorophyll a serves as cofactor. The cofactor is divinyl chlorophyll b.

The protein localises to the cellular thylakoid membrane. In terms of biological role, the antenna complex functions as a light receptor, it captures and delivers excitation energy to photosystems II and I. The Prochlorales pcb genes are not related to higher plant LHCs. This chain is Divinyl chlorophyll a/b light-harvesting protein PcbE (pcbE), found in Prochlorococcus marinus (strain SARG / CCMP1375 / SS120).